A 324-amino-acid chain; its full sequence is Protein ChrB (324 aa).

Together with ChrA1, this protein reduces chromate accumulation and is essential for chromate resistance, possibly as a regulatory protein. The polypeptide is Protein ChrB (Cupriavidus metallidurans (strain ATCC 43123 / DSM 2839 / NBRC 102507 / CH34) (Ralstonia metallidurans)).